Here is a 490-residue protein sequence, read N- to C-terminus: GTPase Der (490 aa).

EngA-type G domains follow at residues 3 to 166 and 203 to 376; these read PVVA…MEDL and IKLA…DSST. Residues 9 to 16, 56 to 60, 118 to 121, 209 to 216, 256 to 260, and 321 to 324 each bind GTP; these read GRPNVGKS, DTGGI, NKTD, DTAGV, and NKWD. Positions 377 to 461 constitute a KH-like domain; it reads RRVGTSMLTR…PIRIQFKEGE (85 aa).

It belongs to the TRAFAC class TrmE-Era-EngA-EngB-Septin-like GTPase superfamily. EngA (Der) GTPase family. In terms of assembly, associates with the 50S ribosomal subunit.

GTPase that plays an essential role in the late steps of ribosome biogenesis. The chain is GTPase Der from Shigella flexneri serotype 5b (strain 8401).